A 158-amino-acid polypeptide reads, in one-letter code: Endoribonuclease YbeY (158 aa).

Residues His118, His122, and His128 each contribute to the Zn(2+) site.

This sequence belongs to the endoribonuclease YbeY family. It depends on Zn(2+) as a cofactor.

It is found in the cytoplasm. In terms of biological role, single strand-specific metallo-endoribonuclease involved in late-stage 70S ribosome quality control and in maturation of the 3' terminus of the 16S rRNA. The polypeptide is Endoribonuclease YbeY (Bartonella henselae (strain ATCC 49882 / DSM 28221 / CCUG 30454 / Houston 1) (Rochalimaea henselae)).